The chain runs to 223 residues: uncharacterized protein (223 aa).

Over residues 1 to 11 (MLWVQRKRRRK) the composition is skewed to basic residues. A disordered region spans residues 1 to 37 (MLWVQRKRRRKETSECPSDKDKSPESHKAKNESWIKS). A compositionally biased stretch (basic and acidic residues) spans 12 to 37 (ETSECPSDKDKSPESHKAKNESWIKS). A Phosphoserine modification is found at S43. 2 disordered regions span residues 49–73 (LDNNASASGNATQTESGSEEVSSTV) and 196–223 (THTFYGHSHHSHHGHPSHQSHSLPNRRH). Positions 51-61 (NNASASGNATQ) are enriched in polar residues. Over residues 62-73 (TESGSEEVSSTV) the composition is skewed to low complexity. Residues 202–223 (HSHHSHHGHPSHQSHSLPNRRH) show a composition bias toward basic residues.

This is an uncharacterized protein from Homo sapiens (Human).